A 1238-amino-acid polypeptide reads, in one-letter code: Anion exchange protein 2 (1238 aa).

The disordered stretch occupies residues 1 to 238; sequence MSGTPRRPAS…YNLQERRRIG (238 aa). The Cytoplasmic portion of the chain corresponds to 1–704; sequence MSGTPRRPAS…SDFRDALDPQ (704 aa). Basic and acidic residues-rich tracts occupy residues 37–49 and 58–75; these read DLHR…RFEE and GGEE…EYHR. 2 stretches are compositionally biased toward basic residues: residues 76 to 85 and 94 to 110; these read QSSHHIHHPL and RRRK…RRRP. The segment covering 120–133 has biased composition (acidic residues); it reads TIEEGEEDEDETSE. Phosphoserine occurs at positions 132, 144, 170, and 172. Positions 141–154 are enriched in polar residues; it reads TDPSPASTPTSVQF. A compositionally biased stretch (gly residues) spans 205–215; that stretch reads GTAGGDDGGAS. Serine 239 is modified (phosphoserine). At threonine 253 the chain carries Phosphothreonine. At lysine 270 the chain carries N6-methyllysine. The disordered stretch occupies residues 277 to 315; it reads VPGVRRHLVRKNAKGSSQSSREGREPGPTPRTRPRAPHK. The segment covering 280–289 has biased composition (basic residues); sequence VRRHLVRKNA. Serine 439 bears the Phosphoserine mark. Residues 445–466 form a disordered region; the sequence is SLLGHHHTQGAESDPHVTEPLI. 4 consecutive transmembrane segments (helical) span residues 705-728, 734-771, 791-813, and 823-844; these read CLAA…GLLG, LIGV…LLVF, VWIG…SFLV, and IFAF…VKIF. Residues 705-1238 form a membrane (anion exchange) region; it reads CLAAVIFIYF…DEYNEMPMPV (534 aa). At 845-897 the chain is on the extracellular side; it reads QEHPLHGCLASNSSEADGGKNTTWTEAAPTPGHGNTSSAEQAGVERPQGQPNT. Residues asparagine 856, asparagine 865, and asparagine 879 are each glycosylated (N-linked (GlcNAc...) asparagine). Residues 858-869 are compositionally biased toward polar residues; it reads SEADGGKNTTWT. Positions 858-892 are disordered; sequence SEADGGKNTTWTEAAPTPGHGNTSSAEQAGVERPQ. A helical membrane pass occupies residues 898-915; it reads ALLSLVLMAGTFFIAFFL. Residues 916-930 are Cytoplasmic-facing; the sequence is RKFKNSRFFPGRIRR. 5 helical membrane passes run 931-951, 985-1007, 1033-1054, 1088-1133, and 1160-1196; these read VIGD…DYSI, PFPV…LIFM, LLLI…LAAA, VTGL…IQFY, and MHLF…TVPL. Cysteine 1170 is lipidated: S-palmitoyl cysteine.

It belongs to the anion exchanger (TC 2.A.31) family. In terms of tissue distribution, expressed in the cochlea (at protein level).

The protein resides in the apical cell membrane. It localises to the basolateral cell membrane. It catalyses the reaction hydrogencarbonate(in) + chloride(out) = hydrogencarbonate(out) + chloride(in). Sodium-independent anion exchanger which mediates the electroneutral exchange of chloride for bicarbonate ions across the cell membrane. Plays an important role in osteoclast differentiation and function. Regulates bone resorption and calpain-dependent actin cytoskeleton organization in osteoclasts via anion exchange-dependent control of pH. Essential for intracellular pH regulation in CD8(+) T-cells upon CD3 stimulation, modulating CD8(+) T-cell response. The sequence is that of Anion exchange protein 2 (SLC4A2) from Cavia porcellus (Guinea pig).